Here is a 383-residue protein sequence, read N- to C-terminus: Vesicle-associated membrane protein-associated protein scs2 (383 aa).

One can recognise an MSP domain in the interval 1–123 (MSVECSGELF…SIFDRKIRCV (123 aa)). At 1 to 362 (MSVECSGELF…TGASLTESPG (362 aa)) the chain is on the cytoplasmic side. Over residues 127 to 146 (KQPPQSADKQVENTSTSNPP) the composition is skewed to polar residues. Disordered stretches follow at residues 127 to 160 (KQPPQSADKQVENTSTSNPPVSVEGSENLASSVG) and 233 to 359 (ESAS…SLTE). A phosphoserine mark is found at serine 236, serine 237, serine 259, serine 261, and serine 268. Residues 241–263 (DVARSKVQDIIDNEIPKPSESPR) show a composition bias toward basic and acidic residues. The span at 289–300 (FDTKKNDFDSKL) shows a compositional bias: basic and acidic residues. A compositionally biased stretch (polar residues) spans 347-359 (ADPSSSTGASLTE). The helical; Anchor for type IV membrane protein transmembrane segment at 363 to 383 (IPPNIVIILCLIFFLIGYLFF) threads the bilayer.

It belongs to the VAMP-associated protein (VAP) (TC 9.B.17) family. As to quaternary structure, interacts (via MSP domain) with duc1 (via FFAT-motif); the interaction is direct and serves to restrict the localization of duc1 to areas of cell membrane-endoplasmic reticulum contact sites, and away from the cell division site. Interacts with epr1.

The protein resides in the endoplasmic reticulum membrane. In terms of biological role, vesicle-associated membrane protein-associated protein (VAP) implicated in maintaining the cortical endoplasmic reticulum (ER)-plasma membrane (PM) attachment. ER-PM contacts function to modulate the distribution of contractile ring components to ensure robust ring assembly. ER-PM contacts function also in controlling exocytosis and maintenance of cell polarity regulating cell shape. VAPs play an important role in regulating eisosome assembly. VAPs also contribute to ER-phagy by tethering atg8 to the ER membrane, but also by maintaining the ER-plasma membrane contact. Restricts the localization of duc1 away from the site of cell division. The polypeptide is Vesicle-associated membrane protein-associated protein scs2 (scs2) (Schizosaccharomyces pombe (strain 972 / ATCC 24843) (Fission yeast)).